A 325-amino-acid chain; its full sequence is Ubiquitin thioesterase OTU1 (325 aa).

Positions 7-86 (RIRSKTGVEN…NVSSISSNPG (80 aa)) are UBX-like. Positions 123–246 (ATRRVTDDDN…GIHYDALSIC (124 aa)) constitute an OTU domain. The segment at 128-134 (TDDDNSC) is cys-loop. Residue aspartate 131 is part of the active site. Cysteine 134 acts as the Nucleophile in catalysis. Residues 185–195 (IQNPKNWGGAI) form a variable-loop region. The his-loop stretch occupies residues 235–239 (YDGIH). Position 238 (isoleucine 238) interacts with substrate. Histidine 239 is a catalytic residue. The tract at residues 265-270 (KDSLAK) is S2 site. The segment at 292 to 316 (LICLNCNKTLKGEKEAAIHASTTGH) adopts a C2H2-type zinc-finger fold. The active site involves histidine 316.

It is found in the cytoplasm. It catalyses the reaction Thiol-dependent hydrolysis of ester, thioester, amide, peptide and isopeptide bonds formed by the C-terminal Gly of ubiquitin (a 76-residue protein attached to proteins as an intracellular targeting signal).. In terms of biological role, hydrolase that can remove conjugated ubiquitin from proteins and may therefore play an important regulatory role at the level of protein turnover by preventing degradation. This chain is Ubiquitin thioesterase OTU1 (yod1), found in Dictyostelium discoideum (Social amoeba).